The sequence spans 209 residues: Large ribosomal subunit protein uL3 (209 aa).

The interval 117 to 142 is disordered; the sequence is FQGPIKRHGQSRGPETHGSRYHRRPG.

This sequence belongs to the universal ribosomal protein uL3 family. Part of the 50S ribosomal subunit. Forms a cluster with proteins L14 and L19.

Its function is as follows. One of the primary rRNA binding proteins, it binds directly near the 3'-end of the 23S rRNA, where it nucleates assembly of the 50S subunit. The sequence is that of Large ribosomal subunit protein uL3 from Clostridioides difficile (strain 630) (Peptoclostridium difficile).